Reading from the N-terminus, the 291-residue chain is Putative transport permease ycf38 (291 aa).

The next 6 helical transmembrane spans lie at 47–67 (ATLMAGIIQPLLWLILFGGLF), 87–107 (SGIIIFTSFTGALNSGLPLMF), 135–155 (FMTCISLIQVVFIVTASLFMG), 165–185 (MIFGLMILLVTVGVTMLSLAL), 195–215 (LLAFILVVNLPFLFSSTALAP), and 262–282 (ICLGQIIILLIALDIMAAYLV). Positions 47–289 (ATLMAGIIQP…YLVSNILKAK (243 aa)) constitute an ABC transmembrane type-2 domain.

Belongs to the ABC-2 integral membrane protein family.

It is found in the plastid. It localises to the chloroplast membrane. The polypeptide is Putative transport permease ycf38 (ycf38) (Pyropia yezoensis (Susabi-nori)).